The chain runs to 481 residues: Aspartyl/glutamyl-tRNA(Asn/Gln) amidotransferase subunit B (481 aa).

This sequence belongs to the GatB/GatE family. GatB subfamily. In terms of assembly, heterotrimer of A, B and C subunits.

It carries out the reaction L-glutamyl-tRNA(Gln) + L-glutamine + ATP + H2O = L-glutaminyl-tRNA(Gln) + L-glutamate + ADP + phosphate + H(+). It catalyses the reaction L-aspartyl-tRNA(Asn) + L-glutamine + ATP + H2O = L-asparaginyl-tRNA(Asn) + L-glutamate + ADP + phosphate + 2 H(+). In terms of biological role, allows the formation of correctly charged Asn-tRNA(Asn) or Gln-tRNA(Gln) through the transamidation of misacylated Asp-tRNA(Asn) or Glu-tRNA(Gln) in organisms which lack either or both of asparaginyl-tRNA or glutaminyl-tRNA synthetases. The reaction takes place in the presence of glutamine and ATP through an activated phospho-Asp-tRNA(Asn) or phospho-Glu-tRNA(Gln). In Pseudomonas fluorescens (strain ATCC BAA-477 / NRRL B-23932 / Pf-5), this protein is Aspartyl/glutamyl-tRNA(Asn/Gln) amidotransferase subunit B.